The following is a 226-amino-acid chain: Beta-phosphoglucomutase (226 aa).

Residue Asp7 is the Nucleophile of the active site. Mg(2+) contacts are provided by Asp7 and Asp9. At Asp7 the chain carries 4-aspartylphosphate. The active-site Proton donor/acceptor is Asp9. Positions 9, 44, 45, 47, 116, 117, and 118 each coordinate beta-D-glucose 6-phosphate. Residue Asp170 coordinates Mg(2+).

This sequence belongs to the HAD-like hydrolase superfamily. CbbY/CbbZ/Gph/YieH family. As to quaternary structure, homodimer. Requires Mg(2+) as cofactor. Post-translationally, autophosphorylated.

Its subcellular location is the cytoplasm. It carries out the reaction beta-D-glucose 1-phosphate = beta-D-glucose 6-phosphate. In terms of biological role, catalyzes the interconversion of D-glucose 1-phosphate (G1P) and D-glucose 6-phosphate (G6P), forming beta-D-glucose 1,6-(bis)phosphate (beta-G16P) as an intermediate. This Bacillus subtilis (strain 168) protein is Beta-phosphoglucomutase (yvdM).